A 274-amino-acid chain; its full sequence is Penicillin-insensitive murein endopeptidase (274 aa).

The N-terminal stretch at Met-1–Ala-19 is a signal peptide. Disulfide bonds link Cys-44–Cys-265, Cys-187–Cys-235, and Cys-216–Cys-223. Positions 110, 113, 120, 147, 150, and 211 each coordinate Zn(2+).

The protein belongs to the peptidase M74 family. Dimer. Requires Zn(2+) as cofactor.

Its subcellular location is the periplasm. Its function is as follows. Murein endopeptidase that cleaves the D-alanyl-meso-2,6-diamino-pimelyl amide bond that connects peptidoglycan strands. Likely plays a role in the removal of murein from the sacculus. This chain is Penicillin-insensitive murein endopeptidase, found in Shigella sonnei (strain Ss046).